Reading from the N-terminus, the 289-residue chain is Probable branched-chain-amino-acid aminotransferase (289 aa).

Residue K154 is modified to N6-(pyridoxal phosphate)lysine.

The protein belongs to the class-IV pyridoxal-phosphate-dependent aminotransferase family. Pyridoxal 5'-phosphate is required as a cofactor.

The enzyme catalyses L-leucine + 2-oxoglutarate = 4-methyl-2-oxopentanoate + L-glutamate. It carries out the reaction L-isoleucine + 2-oxoglutarate = (S)-3-methyl-2-oxopentanoate + L-glutamate. It catalyses the reaction L-valine + 2-oxoglutarate = 3-methyl-2-oxobutanoate + L-glutamate. It participates in amino-acid biosynthesis; L-isoleucine biosynthesis; L-isoleucine from 2-oxobutanoate: step 4/4. The protein operates within amino-acid biosynthesis; L-leucine biosynthesis; L-leucine from 3-methyl-2-oxobutanoate: step 4/4. It functions in the pathway amino-acid biosynthesis; L-valine biosynthesis; L-valine from pyruvate: step 4/4. In terms of biological role, acts on leucine, isoleucine and valine. This chain is Probable branched-chain-amino-acid aminotransferase (ilvE), found in Rickettsia bellii (strain RML369-C).